Reading from the N-terminus, the 260-residue chain is MTSLKLLKEKAPLVICITNDVVKNFTANGLVALGASPAMSEFPADLEDLLKYAGGLLINIGTLTDENWKLYQAALKIAEKYNVPAVLDPVACGAGEYRKKVADDLINNYKLAAIRGNAGEIASLVGIDVASKGVDSAGVDNIDEIALAANEKFNIPIVVTGEVDAIAVNGEVVTIHNGSAMMPKVIGTGCLLGAVVASFIGLEKGQELKSLETAMLVYNIAGEIAEKHPNGHLPGTFKVEFINALYEITDEDVKEFKRVK.

A substrate-binding site is contributed by methionine 39. 2 residues coordinate ATP: arginine 115 and threonine 160. Residue glycine 187 coordinates substrate.

The protein belongs to the Thz kinase family. Requires Mg(2+) as cofactor.

It carries out the reaction 5-(2-hydroxyethyl)-4-methylthiazole + ATP = 4-methyl-5-(2-phosphooxyethyl)-thiazole + ADP + H(+). It functions in the pathway cofactor biosynthesis; thiamine diphosphate biosynthesis; 4-methyl-5-(2-phosphoethyl)-thiazole from 5-(2-hydroxyethyl)-4-methylthiazole: step 1/1. Functionally, catalyzes the phosphorylation of the hydroxyl group of 4-methyl-5-beta-hydroxyethylthiazole (THZ). The sequence is that of Hydroxyethylthiazole kinase 1 from Streptococcus pneumoniae (strain Hungary19A-6).